A 416-amino-acid polypeptide reads, in one-letter code: Calreticulin (416 aa).

A signal peptide spans 1 to 25 (MENRGRNPSFLSLLLLLSLFAIASA). Asn-57 carries an N-linked (GlcNAc...) asparagine glycan. Residues Cys-111 and Cys-143 are joined by a disulfide bond. 4 residues coordinate an alpha-D-glucoside: Tyr-115, Lys-117, Tyr-134, and Asp-141. N-linked (GlcNAc...) asparagine glycosylation is present at Asn-157. A run of 7 repeats spans residues 197–208 (KQTGSLYTDWDL), 216–227 (DPEAKKPEDWDD), 233–244 (DPEDKKPEGYDD), 251–262 (DPEAKKPEDWDD), 266–276 (GEWTAPTIPNP), 280–290 (GPWKAKKIKNP), and 294–304 (GKWKAPMIDNP). The segment at 197–262 (KQTGSLYTDW…EAKKPEDWDD (66 aa)) is 4 X approximate repeats. Over residues 217-241 (PEAKKPEDWDDKEFIPDPEDKKPEG) the composition is skewed to basic and acidic residues. A disordered region spans residues 217–281 (PEAKKPEDWD…TIPNPEYKGP (65 aa)). The interval 266–304 (GEWTAPTIPNPEYKGPWKAKKIKNPNYKGKWKAPMIDNP) is 3 X approximate repeats. Glu-324 contacts an alpha-D-glucoside. Residues 351–381 (EETWGKQKDAEKAAFEELEKKREEEETKDDP) show a composition bias toward basic and acidic residues. A disordered region spans residues 351-416 (EETWGKQKDA…DKDDDQHDEL (66 aa)). Residues 382 to 400 (VESDAEDEDEAEADDSDKD) are compositionally biased toward acidic residues. Residues 401–416 (DADKSDDKDDDQHDEL) are compositionally biased toward basic and acidic residues. The Prevents secretion from ER motif lies at 413-416 (HDEL).

It belongs to the calreticulin family.

The protein localises to the endoplasmic reticulum lumen. Molecular calcium-binding chaperone promoting folding, oligomeric assembly and quality control in the ER via the calreticulin/calnexin cycle. This lectin may interact transiently with almost all of the monoglucosylated glycoproteins that are synthesized in the ER. The polypeptide is Calreticulin (Beta vulgaris (Sugar beet)).